Reading from the N-terminus, the 147-residue chain is Deoxyuridine 5'-triphosphate nucleotidohydrolase (147 aa).

Residues 67 to 69 (RSG), N80, and 84 to 86 (TID) contribute to the substrate site.

The protein belongs to the dUTPase family. It depends on Mg(2+) as a cofactor.

It catalyses the reaction dUTP + H2O = dUMP + diphosphate + H(+). It participates in pyrimidine metabolism; dUMP biosynthesis; dUMP from dCTP (dUTP route): step 2/2. Its function is as follows. This enzyme is involved in nucleotide metabolism: it produces dUMP, the immediate precursor of thymidine nucleotides and it decreases the intracellular concentration of dUTP so that uracil cannot be incorporated into DNA. The sequence is that of Deoxyuridine 5'-triphosphate nucleotidohydrolase from Anaeromyxobacter sp. (strain Fw109-5).